The chain runs to 375 residues: Probable trehalose-phosphate phosphatase 7 (375 aa).

It belongs to the trehalose phosphatase family. It depends on a divalent metal cation as a cofactor.

It catalyses the reaction alpha,alpha-trehalose 6-phosphate + H2O = alpha,alpha-trehalose + phosphate. The protein operates within glycan biosynthesis; trehalose biosynthesis. Removes the phosphate from trehalose 6-phosphate to produce free trehalose. Trehalose accumulation in plant may improve abiotic stress tolerance. This is Probable trehalose-phosphate phosphatase 7 (TPP7) from Oryza sativa subsp. japonica (Rice).